The primary structure comprises 400 residues: Nicotinate phosphoribosyltransferase (400 aa).

H220 is subject to Phosphohistidine; by autocatalysis.

The protein belongs to the NAPRTase family. Post-translationally, transiently phosphorylated on a His residue during the reaction cycle. Phosphorylation strongly increases the affinity for substrates and increases the rate of nicotinate D-ribonucleotide production. Dephosphorylation regenerates the low-affinity form of the enzyme, leading to product release.

The catalysed reaction is nicotinate + 5-phospho-alpha-D-ribose 1-diphosphate + ATP + H2O = nicotinate beta-D-ribonucleotide + ADP + phosphate + diphosphate. It functions in the pathway cofactor biosynthesis; NAD(+) biosynthesis; nicotinate D-ribonucleotide from nicotinate: step 1/1. Its function is as follows. Catalyzes the synthesis of beta-nicotinate D-ribonucleotide from nicotinate and 5-phospho-D-ribose 1-phosphate at the expense of ATP. This is Nicotinate phosphoribosyltransferase from Shigella dysenteriae serotype 1 (strain Sd197).